A 381-amino-acid chain; its full sequence is Prostatic acid phosphatase (381 aa).

A signal peptide spans 1–31 (MRAVPLHLVGTASLTLGFLLLLSLRLDPGQA). Arg-42 lines the substrate pocket. Catalysis depends on His-43, which acts as the Nucleophile. Position 46 (Arg-46) interacts with substrate. Asn-93 carries an N-linked (GlcNAc...) asparagine glycan. Arg-110 contacts substrate. 3 disulfides stabilise this stretch: Cys-160–Cys-371, Cys-214–Cys-312, and Cys-346–Cys-350. N-linked (GlcNAc...) asparagine glycosylation is present at Asn-219. A substrate-binding site is contributed by His-288. Asp-289 acts as the Proton donor in catalysis. A glycan (N-linked (GlcNAc...) asparagine) is linked at Asn-332.

Belongs to the histidine acid phosphatase family. Homodimer; dimer formation is required for phosphatase activity. In terms of processing, N-glycosylated. As to expression, expressed in prostate epithelium. Also expressed in the pelvic nerve and sacral spinal cord. Localizes in peptidergic and non-peptidergic nociceptive (pain-sensing) neurons.

The protein localises to the secreted. Its subcellular location is the cell membrane. It is found in the lysosome membrane. The enzyme catalyses a phosphate monoester + H2O = an alcohol + phosphate. It carries out the reaction a ribonucleoside 5'-phosphate + H2O = a ribonucleoside + phosphate. It catalyses the reaction 1-(9Z-octadecenoyl)-sn-glycero-3-phosphate + H2O = 1-(9Z-octadecenoyl)-sn-glycerol + phosphate. The catalysed reaction is O-phospho-L-tyrosyl-[protein] + H2O = L-tyrosyl-[protein] + phosphate. Its activity is regulated as follows. Inhibited by L(+)-tartrate. A non-specific tyrosine phosphatase that dephosphorylates a diverse number of substrates under acidic conditions (pH 4-6) including alkyl, aryl, and acyl orthophosphate monoesters and phosphorylated proteins. Has lipid phosphatase activity and inactivates lysophosphatidic acid in seminal plasma. In terms of biological role, in addition to its tyrosine phosphatase activity, also has ecto-5'-nucleotidase activity in dorsal root ganglion (DRG) neurons. Generates adenosine from AMP. This extracellular adenosine leads to a decrease in chronic pain by activating A1R in nociceptive neurons. This Rattus norvegicus (Rat) protein is Prostatic acid phosphatase (Acp3).